Reading from the N-terminus, the 226-residue chain is Phosphoribosyl-dephospho-CoA transferase (226 aa).

Active-site residues include D148 and D150.

Belongs to the MdcG family.

The enzyme catalyses apo-[malonate decarboxylase ACP] + 2'-(5''-triphospho-alpha-D-ribosyl)-3'-dephospho-CoA = holo-[malonate decarboxylase ACP] + diphosphate. Transfers 2'-(5-triphosphoribosyl)-3'-dephosphocoenzyme-A to the apo-[acyl-carrier-protein] of the malonate decarboxylase to yield holo-[acyl-carrier-protein]. The polypeptide is Phosphoribosyl-dephospho-CoA transferase (Bradyrhizobium diazoefficiens (strain JCM 10833 / BCRC 13528 / IAM 13628 / NBRC 14792 / USDA 110)).